The chain runs to 245 residues: Orotidine 5'-phosphate decarboxylase (245 aa).

Residues D22, K44, 71 to 80 (DLKFHDIPNT), T131, R192, Q201, G221, and R222 each bind substrate. Catalysis depends on K73, which acts as the Proton donor.

Belongs to the OMP decarboxylase family. Type 1 subfamily. In terms of assembly, homodimer.

It carries out the reaction orotidine 5'-phosphate + H(+) = UMP + CO2. Its pathway is pyrimidine metabolism; UMP biosynthesis via de novo pathway; UMP from orotate: step 2/2. Catalyzes the decarboxylation of orotidine 5'-monophosphate (OMP) to uridine 5'-monophosphate (UMP). The sequence is that of Orotidine 5'-phosphate decarboxylase from Klebsiella pneumoniae (strain 342).